A 363-amino-acid polypeptide reads, in one-letter code: Strychnine O-methyltransferase (363 aa).

Gly-204, Asp-227, Asp-249, Met-250, and Lys-263 together coordinate S-adenosyl-L-methionine. The active-site Proton acceptor is the His-267.

It belongs to the class I-like SAM-binding methyltransferase superfamily. Cation-independent O-methyltransferase family.

It carries out the reaction 10-hydroxystrychnine + S-adenosyl-L-methionine = beta-colubrine + S-adenosyl-L-homocysteine + H(+). It catalyses the reaction 11-demethylbrucine + S-adenosyl-L-methionine = brucine + S-adenosyl-L-homocysteine + H(+). It functions in the pathway alkaloid biosynthesis. Its function is as follows. O-methyltransferase involved in the biosynthesis of curare monoterpene indole alkaloids (MIAs), natural products such as strychnine, a neurotoxic compound used as a pesticide to control rodents, and its pharmacologically active derivatives, including brucine, used to regulate blood pressure. Curare alkaloids act as animal glycine receptor antagonists. Catalyzes the conversion of 10-OH strychnine to beta-colubrine, and of 11-deMe brucine to brucine. This is Strychnine O-methyltransferase from Strychnos nux-vomica (Poison nut).